Consider the following 365-residue polypeptide: MTTKLIPAQQYHDIFIAGQPLIDLRAPIEFDRGAFPSSVNLPLMVDKEREKVGTCYKAQGQQAAIALGHSLVHGVVKQQRIDAWLNFLSANPEAYLYCFRGGLRSQLTQQWLQEAGVTAPYVQGGYKGMRQYLIGVIETAPSQQPLLSLSGMTGSGKTDFLRLRKEAIDLEGIANHRGSSFGKNIDPQPTQINFENQLAIALLRHQLGNHACLLLEDESFLIGRSALPQSFYSAMQTADIVVLEEDDDIRLTRLLDEYVHKMHLGFSERLGLEAGFEAFSHYLLQSLGSIRKRLGGKQYQELQDMMQQALSQQLNQNQTSQHMAWISLLLHKYYDPMYEYQLQKKAGNILFRGSHQAMHEWLDNY.

The region spanning 15–138 (FIAGQPLIDL…MRQYLIGVIE (124 aa)) is the Rhodanese domain. Catalysis depends on C98, which acts as the S-selanylcysteine intermediate.

This sequence belongs to the SelU family. In terms of assembly, monomer.

It catalyses the reaction 5-methylaminomethyl-2-thiouridine(34) in tRNA + selenophosphate + (2E)-geranyl diphosphate + H2O + H(+) = 5-methylaminomethyl-2-selenouridine(34) in tRNA + (2E)-thiogeraniol + phosphate + diphosphate. The catalysed reaction is 5-methylaminomethyl-2-thiouridine(34) in tRNA + (2E)-geranyl diphosphate = 5-methylaminomethyl-S-(2E)-geranyl-thiouridine(34) in tRNA + diphosphate. It carries out the reaction 5-methylaminomethyl-S-(2E)-geranyl-thiouridine(34) in tRNA + selenophosphate + H(+) = 5-methylaminomethyl-2-(Se-phospho)selenouridine(34) in tRNA + (2E)-thiogeraniol. The enzyme catalyses 5-methylaminomethyl-2-(Se-phospho)selenouridine(34) in tRNA + H2O = 5-methylaminomethyl-2-selenouridine(34) in tRNA + phosphate. In terms of biological role, involved in the post-transcriptional modification of the uridine at the wobble position (U34) of tRNA(Lys), tRNA(Glu) and tRNA(Gln). Catalyzes the conversion of 2-thiouridine (S2U-RNA) to 2-selenouridine (Se2U-RNA). Acts in a two-step process involving geranylation of 2-thiouridine (S2U) to S-geranyl-2-thiouridine (geS2U) and subsequent selenation of the latter derivative to 2-selenouridine (Se2U) in the tRNA chain. This Shewanella sp. (strain ANA-3) protein is tRNA 2-selenouridine synthase.